We begin with the raw amino-acid sequence, 682 residues long: Pneumocandin biosynthesis cluster protein B (682 aa).

The segment covering 63 to 73 (SSLSSTEVTSS) has biased composition (low complexity). Disordered regions lie at residues 63–86 (SSLS…DAPE), 107–129 (QNTP…DTNQ), and 251–358 (SEST…SPAN). Polar residues-rich tracts occupy residues 257–279 (NTGS…SHSS) and 310–320 (PRQTTEATPCD). A compositionally biased stretch (basic and acidic residues) spans 335–349 (PERRSMKMVRKEARD).

In terms of biological role, part of the gene cluster that mediates the biosynthesis of pneumocandins, lipohexapeptides of the echinocandin family that prevent fungal cell wall formation by non-competitive inhibition of beta-1,3-glucan synthase. The 10,12-dimethylmyristoyl side chain is synthesized by the reducing polyketide synthase gloL/GLPKS4. The thioesterase gloN/GLHYD exclusively interacts with gloL/GLPKS4 to maintain turnover of the polyketide side chain. The 10R,12S-dimethylmyristic acid is then transferred to the first thiolation domain of the nonribosomal peptide synthetase gloA/GLNRPS4 by the acyl-AMP ligase gloD/GLligase, followed by its acylation to L-ornithine to trigger elongation of the cyclic hexapeptide. L-ornithine, 4R-hydroxyl-L-proline (generated from L-proline by the dioxygenase gloF/GLOXY2), 3S-hydroxyl-L-homotyrosine (generated by gloG/GLHtyB, gloH/GLHtyA, gloI/GLHtyC, gloJ/GLHtyD and hydroxylated at C-3 by the dioxygenase gloM/GLOXY1), 3R-hydroxyl-L-glutamine (generated from L-glutamine probably by the dioxygenase gloE/GLOXY3) and 3S-hydroxyl-L-proline (generated from L-proline by the dioxygenase gloF/GLOXY2 to yield pneumocandin B0), or 3S-hydroxyl-4S-methyl-L-proline (generated from L-leucine by the dioxygenase gloC/GLOXY4 to yield pneumocandin A0) are sequentially added to the growing chain. The last C domain of gloA/GLNRPS4 is proposed to be responsible for cyclization by condensation to form the peptide bond between L-ornithine and 3S-hydroxyl-4S-methyl-L-proline (for pneumocandin A0) or 3S-hydroxyl-L-proline (for pneumocandin B0). Finally, the subsequent C-4 hydroxylation of 3S-hydroxyl-L-homotyrosine and L-ornithine dihydroxylation at C-4 and C-5 are performed by the cytochrome P450 monooxygenases gloP/GLP450-1 and gloO/GLP450-2, respectively. This chain is Pneumocandin biosynthesis cluster protein B, found in Glarea lozoyensis (strain ATCC 20868 / MF5171).